Consider the following 103-residue polypeptide: UPF0091 protein PH0944 (103 aa).

It belongs to the UPF0091 family.

This is UPF0091 protein PH0944 from Pyrococcus horikoshii (strain ATCC 700860 / DSM 12428 / JCM 9974 / NBRC 100139 / OT-3).